Here is an 877-residue protein sequence, read N- to C-terminus: DNA repair protein rad16 (877 aa).

At serine 71 the chain carries Phosphoserine; by CK2. The disordered stretch occupies residues serine 440–aspartate 490. The segment covering lysine 444–alanine 454 has biased composition (basic and acidic residues). Polar residues predominate over residues asparagine 475–aspartate 490. Residues arginine 652 to glutamine 732 enclose the ERCC4 domain.

The protein belongs to the XPF family. Heterodimer composed of rad16 and swi10.

Its subcellular location is the nucleus. It is found in the cytoplasm. The protein localises to the cytoskeleton. It localises to the microtubule organizing center. The protein resides in the spindle pole body. Its function is as follows. Endonuclease that specifically degrades single-stranded DNA and which is involved in nucleotide excision repair of DNA damaged with UV light, bulky adducts, or cross-linking agents. Required for double strand break-induced interchromosomal gene conversion. The sequence is that of DNA repair protein rad16 (rad16) from Schizosaccharomyces pombe (strain 972 / ATCC 24843) (Fission yeast).